The sequence spans 932 residues: Protocadherin gamma-A12 (932 aa).

The first 29 residues, 1-29, serve as a signal peptide directing secretion; the sequence is MIPARLHRDYKGLVLLGILLGTLWETGCT. 6 consecutive Cadherin domains span residues 30–133, 134–242, 243–347, 348–452, 453–562, and 570–683; these read QIRY…APYF, RESE…APAF, AQPE…APEV, VLTS…PPVF, PQAS…APEI, and DGST…SPAN. Over 30–692 the chain is Extracellular; sequence QIRYSVPEEL…NSETSDLTLY (663 aa). Asn265, Asn419, and Asn545 each carry an N-linked (GlcNAc...) asparagine glycan. A helical transmembrane segment spans residues 693–713; it reads LVVAVAAVSCVFLAFVILLLA. Residues 714 to 932 are Cytoplasmic-facing; that stretch reads LRLRRWHKSR…KKKSGKKEKK (219 aa). Disordered stretches follow at residues 803-841 and 902-932; these read GHGLIEQAPPNTDWRFSQAQRPGTSGSQNGDDTGTWPNN and ATLTNAAGKRDGKAPAGGNGNKKKSGKKEKK. Positions 816-841 are enriched in polar residues; that stretch reads WRFSQAQRPGTSGSQNGDDTGTWPNN. A compositionally biased stretch (basic residues) spans 922 to 932; it reads NKKKSGKKEKK.

The protein localises to the cell membrane. Functionally, potential calcium-dependent cell-adhesion protein. May be involved in the establishment and maintenance of specific neuronal connections in the brain. This Pan troglodytes (Chimpanzee) protein is Protocadherin gamma-A12 (PCDHGA12).